The sequence spans 137 residues: Large ribosomal subunit protein uL16 (137 aa).

A compositionally biased stretch (basic residues) spans 1–13; it reads MLQPKRRKYRKEQ. A disordered region spans residues 1–22; the sequence is MLQPKRRKYRKEQKGRNTGVAT.

It belongs to the universal ribosomal protein uL16 family. Part of the 50S ribosomal subunit.

Functionally, binds 23S rRNA and is also seen to make contacts with the A and possibly P site tRNAs. This chain is Large ribosomal subunit protein uL16, found in Polynucleobacter asymbioticus (strain DSM 18221 / CIP 109841 / QLW-P1DMWA-1) (Polynucleobacter necessarius subsp. asymbioticus).